A 695-amino-acid polypeptide reads, in one-letter code: Glycine--tRNA ligase beta subunit (695 aa).

The protein belongs to the class-II aminoacyl-tRNA synthetase family. In terms of assembly, tetramer of two alpha and two beta subunits.

Its subcellular location is the cytoplasm. The enzyme catalyses tRNA(Gly) + glycine + ATP = glycyl-tRNA(Gly) + AMP + diphosphate. This chain is Glycine--tRNA ligase beta subunit, found in Lawsonia intracellularis (strain PHE/MN1-00).